The sequence spans 436 residues: UPF0597 protein YhaM (436 aa).

The protein belongs to the UPF0597 family.

In Escherichia coli O139:H28 (strain E24377A / ETEC), this protein is UPF0597 protein YhaM.